Consider the following 355-residue polypeptide: NADH-quinone oxidoreductase subunit H (355 aa).

The next 8 helical transmembrane spans lie at 25–45 (VVRI…LILW), 91–111 (WLYL…WAVI), 126–146 (LLYA…AGWA), 170–190 (MGFA…SEIV), 205–225 (FLSW…ISGI), 253–273 (MAFA…SALA), 290–310 (FIPG…VFIW), and 330–350 (VFLP…MSPL).

This sequence belongs to the complex I subunit 1 family. In terms of assembly, NDH-1 is composed of 14 different subunits. Subunits NuoA, H, J, K, L, M, N constitute the membrane sector of the complex.

Its subcellular location is the cell inner membrane. It carries out the reaction a quinone + NADH + 5 H(+)(in) = a quinol + NAD(+) + 4 H(+)(out). Functionally, NDH-1 shuttles electrons from NADH, via FMN and iron-sulfur (Fe-S) centers, to quinones in the respiratory chain. The immediate electron acceptor for the enzyme in this species is believed to be ubiquinone. Couples the redox reaction to proton translocation (for every two electrons transferred, four hydrogen ions are translocated across the cytoplasmic membrane), and thus conserves the redox energy in a proton gradient. This subunit may bind ubiquinone. This Burkholderia cenocepacia (strain HI2424) protein is NADH-quinone oxidoreductase subunit H.